The following is a 366-amino-acid chain: tRNA N6-adenosine threonylcarbamoyltransferase (366 aa).

Histidine 119 and histidine 123 together coordinate Fe cation. Substrate-binding positions include 142-146, aspartate 175, glycine 188, aspartate 192, and asparagine 281; that span reads LVSGG. Aspartate 309 is a binding site for Fe cation.

This sequence belongs to the KAE1 / TsaD family. It depends on Fe(2+) as a cofactor.

The protein localises to the cytoplasm. It catalyses the reaction L-threonylcarbamoyladenylate + adenosine(37) in tRNA = N(6)-L-threonylcarbamoyladenosine(37) in tRNA + AMP + H(+). Functionally, required for the formation of a threonylcarbamoyl group on adenosine at position 37 (t(6)A37) in tRNAs that read codons beginning with adenine. Is involved in the transfer of the threonylcarbamoyl moiety of threonylcarbamoyl-AMP (TC-AMP) to the N6 group of A37, together with TsaE and TsaB. TsaD likely plays a direct catalytic role in this reaction. The polypeptide is tRNA N6-adenosine threonylcarbamoyltransferase (Synechococcus sp. (strain JA-3-3Ab) (Cyanobacteria bacterium Yellowstone A-Prime)).